The primary structure comprises 204 residues: Putative AgrB-like protein (204 aa).

A run of 5 helical transmembrane segments spans residues 52-74 (YGIALVTGLLLQTVTVHLSYLWL), 87-107 (LNCTLISLLMFVLAPFVFQNI), 111-131 (NWIVLGTFGFILLNMFLFAPA), 151-168 (AMIGTLILTGIALLIPFA), and 173-190 (LIMVGSLFQVISINPLTY).

The protein belongs to the AgrB family.

The protein resides in the cell membrane. May be involved in the proteolytic processing of a quorum sensing system signal molecule precursor. This chain is Putative AgrB-like protein, found in Listeria monocytogenes serovar 1/2a (strain ATCC BAA-679 / EGD-e).